Consider the following 437-residue polypeptide: Bystin (437 aa).

The disordered stretch occupies residues 1–105 (MPKFKAARGV…DGSDDEDEEW (105 aa)). The residue at position 40 (R40) is an Omega-N-methylarginine. S55 carries the phosphoserine modification. The span at 71-87 (AEHGTGDKPAAPRERTT) shows a compositional bias: basic and acidic residues. S98 carries the phosphoserine modification. A Phosphothreonine modification is found at T156. Phosphoserine occurs at positions 167 and 414.

It belongs to the bystin family. In terms of assembly, binds trophinin, tastin and cytokeratins. As to expression, found in the placenta from the sixth week of pregnancy. Was localized in the cytoplasm of the syncytiotrophoblast in the chorionic villi and in endometrial decidual cells at the uteroplacental interface. After week 10, the level decreased and then disappeared from placental villi.

It is found in the cytoplasm. It localises to the nucleus. The protein resides in the nucleolus. Required for processing of 20S pre-rRNA precursor and biogenesis of 40S ribosomal subunits. May be required for trophinin-dependent regulation of cell adhesion during implantation of human embryos. This is Bystin from Homo sapiens (Human).